Consider the following 417-residue polypeptide: MTKIKNYTLNFGPQHPAAHGVLRLVLELDGEVIQRADPHIGLLHRATEKLAETRTWIQNVPYMDRLDYVSMMSNEHAYVLAIEKLLQVDVPLRAQYIRVMFDELTRLLNHLLWIGCHGLDVGAMAVFLYAFRDREDIFDMYEAVSGARMHAAYYRPGGVYRDLPDQMAQYSKSKIRSASAIKRLNENRSGTLLDFIDQFTNGFDANVDEYCNLLTDNRIWKQRLVNIGIVTPERALQLGFTGPMLRGSGIEWDLRKKQPYEVYDRLDFDIPVGVNGDSYDRYLVRMEEMRQSNRIIKQCVAWLKANSGPVMSDNHKVSPPKRVDMKTNMEELIHHFKLFTEGMHVPNGEAYSAVEHPKGEFGIYLISDGANKPYRMKIRAPGFVHLSAMDEMSRGHMLADAVTIIGTQDIVFGEIDR.

The protein belongs to the complex I 49 kDa subunit family. As to quaternary structure, NDH-1 is composed of 14 different subunits. Subunits NuoB, C, D, E, F, and G constitute the peripheral sector of the complex.

The protein localises to the cell membrane. It carries out the reaction a quinone + NADH + 5 H(+)(in) = a quinol + NAD(+) + 4 H(+)(out). In terms of biological role, NDH-1 shuttles electrons from NADH, via FMN and iron-sulfur (Fe-S) centers, to quinones in the respiratory chain. The immediate electron acceptor for the enzyme in this species is believed to be ubiquinone. Couples the redox reaction to proton translocation (for every two electrons transferred, four hydrogen ions are translocated across the cytoplasmic membrane), and thus conserves the redox energy in a proton gradient. The protein is NADH-quinone oxidoreductase subunit D of Polynucleobacter asymbioticus (strain DSM 18221 / CIP 109841 / QLW-P1DMWA-1) (Polynucleobacter necessarius subsp. asymbioticus).